A 313-amino-acid chain; its full sequence is Methionyl-tRNA formyltransferase (313 aa).

109–112 (SLLP) contacts (6S)-5,6,7,8-tetrahydrofolate.

The protein belongs to the Fmt family.

It catalyses the reaction L-methionyl-tRNA(fMet) + (6R)-10-formyltetrahydrofolate = N-formyl-L-methionyl-tRNA(fMet) + (6S)-5,6,7,8-tetrahydrofolate + H(+). Functionally, attaches a formyl group to the free amino group of methionyl-tRNA(fMet). The formyl group appears to play a dual role in the initiator identity of N-formylmethionyl-tRNA by promoting its recognition by IF2 and preventing the misappropriation of this tRNA by the elongation apparatus. The chain is Methionyl-tRNA formyltransferase from Thermotoga neapolitana (strain ATCC 49049 / DSM 4359 / NBRC 107923 / NS-E).